Consider the following 470-residue polypeptide: 3-isopropylmalate dehydratase large subunit (470 aa).

3 residues coordinate [4Fe-4S] cluster: cysteine 351, cysteine 411, and cysteine 414.

Belongs to the aconitase/IPM isomerase family. LeuC type 1 subfamily. In terms of assembly, heterodimer of LeuC and LeuD. Requires [4Fe-4S] cluster as cofactor.

It carries out the reaction (2R,3S)-3-isopropylmalate = (2S)-2-isopropylmalate. Its pathway is amino-acid biosynthesis; L-leucine biosynthesis; L-leucine from 3-methyl-2-oxobutanoate: step 2/4. Catalyzes the isomerization between 2-isopropylmalate and 3-isopropylmalate, via the formation of 2-isopropylmaleate. The chain is 3-isopropylmalate dehydratase large subunit from Shewanella frigidimarina (strain NCIMB 400).